We begin with the raw amino-acid sequence, 245 residues long: Mannose/glucose-specific lectin (245 aa).

A carbohydrate contacts are provided by D87 and G107. N-linked (GlcNAc...) asparagine glycosylation is present at N119. Mn(2+) contacts are provided by E129 and D131. 2 residues coordinate Ca(2+): D131 and F133. Residues S138 and N139 each contribute to the a carbohydrate site. Positions 139 and 142 each coordinate Ca(2+). 2 residues coordinate Mn(2+): D142 and H147. The a carbohydrate site is built by G221, E222, and Q223.

Belongs to the leguminous lectin family. Homodimer.

Functionally, mannose/glucose-specific lectin that also binds derivatives N-acetyl-D-glucosamine and alpha-methyl-D-mannopyranoside with even higher affinity. Has hemagglutinating activity towards rabbit erythrocytes. Is toxic towards brine shrimp A.nauplii. In rats, induces dose-dependent paw edema. The protein is Mannose/glucose-specific lectin of Centrolobium tomentosum (Arariba).